A 216-amino-acid polypeptide reads, in one-letter code: Probable nicotinate-nucleotide adenylyltransferase (216 aa).

Belongs to the NadD family.

It carries out the reaction nicotinate beta-D-ribonucleotide + ATP + H(+) = deamido-NAD(+) + diphosphate. Its pathway is cofactor biosynthesis; NAD(+) biosynthesis; deamido-NAD(+) from nicotinate D-ribonucleotide: step 1/1. In terms of biological role, catalyzes the reversible adenylation of nicotinate mononucleotide (NaMN) to nicotinic acid adenine dinucleotide (NaAD). In Geobacter sp. (strain M21), this protein is Probable nicotinate-nucleotide adenylyltransferase.